Consider the following 105-residue polypeptide: Thiosulfate sulfurtransferase GlpE (105 aa).

In terms of domain architecture, Rhodanese spans M15 to T103. Residue C63 is the Cysteine persulfide intermediate of the active site.

It belongs to the GlpE family.

The protein localises to the cytoplasm. The enzyme catalyses thiosulfate + hydrogen cyanide = thiocyanate + sulfite + 2 H(+). It carries out the reaction thiosulfate + [thioredoxin]-dithiol = [thioredoxin]-disulfide + hydrogen sulfide + sulfite + 2 H(+). Its function is as follows. Transferase that catalyzes the transfer of sulfur from thiosulfate to thiophilic acceptors such as cyanide or dithiols. May function in a CysM-independent thiosulfate assimilation pathway by catalyzing the conversion of thiosulfate to sulfite, which can then be used for L-cysteine biosynthesis. The polypeptide is Thiosulfate sulfurtransferase GlpE (Haemophilus influenzae (strain 86-028NP)).